Consider the following 92-residue polypeptide: MPRSLKKGPFIDLHLLKKVEKAVESGDKKPLRTWSRRSTIFPNMIGLTIAVHNGRQHVPVFVSDEMVGHKLGEFAPTRTYRGHAADKKAKKK.

The protein belongs to the universal ribosomal protein uS19 family.

Functionally, protein S19 forms a complex with S13 that binds strongly to the 16S ribosomal RNA. The polypeptide is Small ribosomal subunit protein uS19 (Klebsiella pneumoniae (strain 342)).